The following is a 1481-amino-acid chain: Structural protein ORF147 (1481 aa).

2 disordered regions span residues 65-88 (AEKR…ENLE) and 1319-1403 (DEKL…PPIP). 3 stretches are compositionally biased toward low complexity: residues 73-84 (KGSQKKSNSSSS), 1323-1336 (SSTV…SPKT), and 1393-1403 (SSRTTITPPIP).

It localises to the virion. The sequence is that of Structural protein ORF147 from Noctuidae (owlet moths).